A 460-amino-acid chain; its full sequence is Argininosuccinate lyase (460 aa).

This sequence belongs to the lyase 1 family. Argininosuccinate lyase subfamily.

The protein resides in the cytoplasm. The enzyme catalyses 2-(N(omega)-L-arginino)succinate = fumarate + L-arginine. It functions in the pathway amino-acid biosynthesis; L-arginine biosynthesis; L-arginine from L-ornithine and carbamoyl phosphate: step 3/3. The polypeptide is Argininosuccinate lyase (Staphylococcus haemolyticus (strain JCSC1435)).